The following is a 64-amino-acid chain: MKIAEIKELATKELQERLDAEVAAYDQMRINHAVSPLDSPAKLKHQRRMIAQMKTVLRQRELNK.

The protein belongs to the universal ribosomal protein uL29 family.

This Porphyromonas gingivalis (strain ATCC 33277 / DSM 20709 / CIP 103683 / JCM 12257 / NCTC 11834 / 2561) protein is Large ribosomal subunit protein uL29.